The sequence spans 129 residues: Large ribosomal subunit protein uL22 (129 aa).

The protein belongs to the universal ribosomal protein uL22 family. In terms of assembly, part of the 50S ribosomal subunit.

In terms of biological role, this protein binds specifically to 23S rRNA; its binding is stimulated by other ribosomal proteins, e.g. L4, L17, and L20. It is important during the early stages of 50S assembly. It makes multiple contacts with different domains of the 23S rRNA in the assembled 50S subunit and ribosome. The globular domain of the protein is located near the polypeptide exit tunnel on the outside of the subunit, while an extended beta-hairpin is found that lines the wall of the exit tunnel in the center of the 70S ribosome. The protein is Large ribosomal subunit protein uL22 of Metamycoplasma hominis (strain ATCC 23114 / DSM 25592 / NBRC 14850 / NCTC 10111 / PG21) (Mycoplasma hominis).